The sequence spans 295 residues: MSRILTHVPGRTVNRSYALPALVGSAAGRLSGNHSHGREAYIALPQWACSRQPSTPPLQTPGRINALWSLRPVLPMPGRGCQLLRLGGRWLSVVCCRNGSMNLVVWAEGNGVARVIAYRWLRVGRLPVPARRVGRVILVDEPAGQPGRWGRTAVCARLSSADQKVDLDRQVVGVTAWATAEQIPVGKVVTEVGSALYGRRRTFLTLLGDPTVRRIVMKRRDRLGRFGFECVQAVLAADGRELVVVDSADVDDDVVGDITEILTSICARLYGKRAAGNRAARAVAAAARAGGHEAR.

The region spanning 151–290 is the Resolvase/invertase-type recombinase catalytic domain; that stretch reads RTAVCARLSS…RAVAAAARAG (140 aa). Ser-159 (O-(5'-phospho-DNA)-serine intermediate) is an active-site residue.

This is an uncharacterized protein from Mycobacterium bovis (strain ATCC BAA-935 / AF2122/97).